The following is a 149-amino-acid chain: UPF0260 protein Pput_1301 (149 aa).

Belongs to the UPF0260 family.

The protein is UPF0260 protein Pput_1301 of Pseudomonas putida (strain ATCC 700007 / DSM 6899 / JCM 31910 / BCRC 17059 / LMG 24140 / F1).